We begin with the raw amino-acid sequence, 368 residues long: 3-isopropylmalate dehydrogenase (368 aa).

80 to 93 contributes to the NAD(+) binding site; sequence GPKWDNLEFSKKPE. The substrate site is built by Arg-100, Arg-110, Arg-138, and Asp-229. Residues Asp-229, Asp-253, and Asp-257 each contribute to the Mg(2+) site. Residue 292-304 coordinates NAD(+); sequence GSAPDIAGKEIAN.

It belongs to the isocitrate and isopropylmalate dehydrogenases family. LeuB type 1 subfamily. Homodimer. The cofactor is Mg(2+). It depends on Mn(2+) as a cofactor.

Its subcellular location is the cytoplasm. The enzyme catalyses (2R,3S)-3-isopropylmalate + NAD(+) = 4-methyl-2-oxopentanoate + CO2 + NADH. It functions in the pathway amino-acid biosynthesis; L-leucine biosynthesis; L-leucine from 3-methyl-2-oxobutanoate: step 3/4. Catalyzes the oxidation of 3-carboxy-2-hydroxy-4-methylpentanoate (3-isopropylmalate) to 3-carboxy-4-methyl-2-oxopentanoate. The product decarboxylates to 4-methyl-2 oxopentanoate. This Pelagibacter ubique (strain HTCC1062) protein is 3-isopropylmalate dehydrogenase.